We begin with the raw amino-acid sequence, 149 residues long: UPF0260 protein PSPTO_3918 (149 aa).

It belongs to the UPF0260 family.

The protein is UPF0260 protein PSPTO_3918 of Pseudomonas syringae pv. tomato (strain ATCC BAA-871 / DC3000).